The primary structure comprises 315 residues: Ferrochelatase (315 aa).

Fe cation contacts are provided by histidine 193 and glutamate 273.

This sequence belongs to the ferrochelatase family.

It is found in the cytoplasm. The enzyme catalyses heme b + 2 H(+) = protoporphyrin IX + Fe(2+). Its pathway is porphyrin-containing compound metabolism; protoheme biosynthesis; protoheme from protoporphyrin-IX: step 1/1. In terms of biological role, catalyzes the ferrous insertion into protoporphyrin IX. The sequence is that of Ferrochelatase from Wolbachia sp. subsp. Drosophila simulans (strain wRi).